The chain runs to 480 residues: Acyl-coenzyme A synthetase ACSM6, mitochondrial (480 aa).

A mitochondrion-targeting transit peptide spans 1 to 21 (MLGRFQPFSLVRSFRLGFEAC). Residues 226 to 234 (TKGTTGAPK), 366 to 371 (EGYGQT), aspartate 453, and arginine 468 contribute to the ATP site.

Belongs to the ATP-dependent AMP-binding enzyme family. As to quaternary structure, monomer. Mg(2+) serves as cofactor. The cofactor is Mn(2+).

It localises to the mitochondrion. The enzyme catalyses a medium-chain fatty acid + ATP + CoA = a medium-chain fatty acyl-CoA + AMP + diphosphate. Functionally, catalyzes the activation of fatty acids by CoA to produce an acyl-CoA, the first step in fatty acid metabolism. This chain is Acyl-coenzyme A synthetase ACSM6, mitochondrial (ACSM6), found in Homo sapiens (Human).